The chain runs to 334 residues: Aspartate carbamoyltransferase catalytic subunit (334 aa).

Carbamoyl phosphate is bound by residues Arg70 and Thr71. Lys98 provides a ligand contact to L-aspartate. Carbamoyl phosphate is bound by residues Arg120, His150, and Gln153. Positions 183 and 239 each coordinate L-aspartate. Residues Gly280 and Pro281 each contribute to the carbamoyl phosphate site.

This sequence belongs to the aspartate/ornithine carbamoyltransferase superfamily. ATCase family. In terms of assembly, heterododecamer (2C3:3R2) of six catalytic PyrB chains organized as two trimers (C3), and six regulatory PyrI chains organized as three dimers (R2).

The catalysed reaction is carbamoyl phosphate + L-aspartate = N-carbamoyl-L-aspartate + phosphate + H(+). The protein operates within pyrimidine metabolism; UMP biosynthesis via de novo pathway; (S)-dihydroorotate from bicarbonate: step 2/3. In terms of biological role, catalyzes the condensation of carbamoyl phosphate and aspartate to form carbamoyl aspartate and inorganic phosphate, the committed step in the de novo pyrimidine nucleotide biosynthesis pathway. The polypeptide is Aspartate carbamoyltransferase catalytic subunit (Pseudomonas aeruginosa (strain LESB58)).